The primary structure comprises 300 residues: MMTLEPNQEQLKKMKSHPGFIAALDQSGGSTPGALADYGIEPNTYSGDDQMFALVHQMRTRIMTSPGFTGDRILAAILFEDTMNREVDGEPTANYLWQNKQIVPILKVDKGLAQEKDGSQLMKPIPQLDSLLMKAKKKGIFGTKMRSFIKHANPAGIEAIVDQQFELAQQIIAAGLVPIIEPEVDIHCSEKAQAEALLKQAMLKHLNQLPKGQWVMLKLTLPEQDNLYSNCIEHANVLRVVALSGGYSQAEANERLSRNHGVIASFSRALTEGLTAQQTDAEFNTMLDESIEKIYQASIT.

The active-site Proton acceptor is Glu-181. The active-site Schiff-base intermediate with dihydroxyacetone-P is the Lys-218.

It belongs to the class I fructose-bisphosphate aldolase family.

It carries out the reaction beta-D-fructose 1,6-bisphosphate = D-glyceraldehyde 3-phosphate + dihydroxyacetone phosphate. Its pathway is carbohydrate degradation; glycolysis; D-glyceraldehyde 3-phosphate and glycerone phosphate from D-glucose: step 4/4. This chain is Fructose-bisphosphate aldolase class 1 (fda), found in Synechocystis sp. (strain ATCC 27184 / PCC 6803 / Kazusa).